A 464-amino-acid polypeptide reads, in one-letter code: Dihydrolipoyl dehydrogenase (464 aa).

Residues 36–44, K53, and A119 contribute to the FAD site; that span reads EGAALGGTC. A disulfide bond links C44 and C49. NAD(+)-binding positions include 184-188, E207, and 269-272; these read GGGYI and AVGR. Positions 311 and 319 each coordinate FAD. The Proton acceptor role is filled by H443.

It belongs to the class-I pyridine nucleotide-disulfide oxidoreductase family. In terms of assembly, homodimer. FAD serves as cofactor.

Its subcellular location is the cytoplasm. The catalysed reaction is N(6)-[(R)-dihydrolipoyl]-L-lysyl-[protein] + NAD(+) = N(6)-[(R)-lipoyl]-L-lysyl-[protein] + NADH + H(+). The branched-chain alpha-keto dehydrogenase complex catalyzes the overall conversion of alpha-keto acids to acyl-CoA and CO(2). It contains multiple copies of 3 enzymatic components: branched-chain alpha-keto acid decarboxylase (E1), lipoamide acyltransferase (E2) and lipoamide dehydrogenase (E3). The chain is Dihydrolipoyl dehydrogenase from Pseudomonas aeruginosa (strain ATCC 15692 / DSM 22644 / CIP 104116 / JCM 14847 / LMG 12228 / 1C / PRS 101 / PAO1).